The sequence spans 316 residues: MSQQFNVAIFGATGAVGETMLEVLQEREFPVDELFLLASERSEGKTYRFNGKTVRVQNVEEFDWSQVHIALFSAGGELSAHWAPIRAEAGVVVIDNTSHFRYDYDIPLVIPEVNPEAIAEFRNRNIIANPNCSTIQMLVALKPIYDAVGIERINVTTYQSVSGAGKAGIDELAGQTAKLLNGYPAETNTFSQQIAFNCIPQIDQFMDNGYTKEEMKMVWETQKIFNDPSIMVNPTCVRVPVFYGHAEAVHVETRAPIDAEQVMDMLDQTDGIELFRGADFPTQVRDAGGKDHVLVGRVRNDISHHSGVNLWVVADN.

Residues 13-16 and 41-42 contribute to the NADP(+) site; these read TGAV and RS. Position 101 (R101) interacts with phosphate. Residue C132 is the Acyl-thioester intermediate of the active site. Q159 is a binding site for substrate. 162-163 lines the NADP(+) pocket; sequence SG. Residue K216 participates in phosphate binding. R238 is a binding site for substrate. H245 (proton acceptor) is an active-site residue. NADP(+) is bound at residue N316.

It belongs to the aspartate-semialdehyde dehydrogenase family. Homodimer.

The catalysed reaction is L-aspartate 4-semialdehyde + phosphate + NADP(+) = 4-phospho-L-aspartate + NADPH + H(+). It participates in amino-acid biosynthesis; L-lysine biosynthesis via DAP pathway; (S)-tetrahydrodipicolinate from L-aspartate: step 2/4. It functions in the pathway amino-acid biosynthesis; L-methionine biosynthesis via de novo pathway; L-homoserine from L-aspartate: step 2/3. The protein operates within amino-acid biosynthesis; L-threonine biosynthesis; L-threonine from L-aspartate: step 2/5. Catalyzes the NADPH-dependent formation of L-aspartate-semialdehyde (L-ASA) by the reductive dephosphorylation of L-aspartyl-4-phosphate. This chain is Aspartate-semialdehyde dehydrogenase (asd), found in Vibrio mimicus.